Here is a 609-residue protein sequence, read N- to C-terminus: AARADGTMGFSSELCSPQGHGAEQQMQEAELRLLEGMRKWMAQRVKSDREYAGLLHHMSLQDGGGRGTGPYSPISQSWAEITSQTEGLSRLLRQHAEDLNSGPLSKLGLLIRERQQLRKTYSEQWQQLQQELTKTHNQDIEKLKSQYRALARDSAQARRKYQEASKDKDRDKAKLEQLGPGEPPPVLLLQDDRHSTSSSEQEREGGRTPTLEILKSHISGIFRPKFSLPPPLQLVPEVQKPLHEQLWYHGALPRAEVAELLTHSGDFLVRESQGKQEYVLSVLWDGQPRHFIIQSADNLYRPEGDGFASIPLLVDHLLRSQQPLTKKSGIVLNRAVPKDKWVLNHEDLVLGEQIGRGNFGEVFSGRLRADNTLVAVKSCRETLPPDIKAKFLQEAKILKQYSHPNIVRLIGVCTQKQPIYIVMELVQGGDFLTFLRTEGARLRMKTLLQMVGDAAAGMEYLESKCCIHRDLAARNCLVTEKNVLKISDFGMSREAADGIYAASGGLRQVPVKWTAPEALNYGRYSSESDVWSFGILLWETFSLGASPYPNLSNQQTREFVEKGGRLPCPELCPDAVFRLMEQCWAYEPGQRPSFSAIYQELQSIRKRHR.

Disordered stretches follow at residues 1-20 and 152-208; these read AARA…PQGH and RDSA…GGRT. An F-BAR; degenerate domain is found at 8–174; that stretch reads MGFSSELCSP…SKDKDRDKAK (167 aa). Composition is skewed to basic and acidic residues over residues 160–175 and 190–206; these read KYQE…KAKL and QDDR…REGG. In terms of domain architecture, SH2 spans 247–336; that stretch reads WYHGALPRAE…KSGIVLNRAV (90 aa). Positions 348–609 constitute a Protein kinase domain; it reads LVLGEQIGRG…ELQSIRKRHR (262 aa). ATP-binding positions include 354 to 362 and Lys-377; that span reads IGRGNFGEV. The active-site Proton acceptor is Asp-470. At Tyr-500 the chain carries Phosphotyrosine; by autocatalysis.

Belongs to the protein kinase superfamily. Tyr protein kinase family. Fes/fps subfamily.

It catalyses the reaction L-tyrosyl-[protein] + ATP = O-phospho-L-tyrosyl-[protein] + ADP + H(+). This is Tyrosine-protein kinase transforming protein Fes (V-FES) from Felidae (cat family).